Consider the following 263-residue polypeptide: Renal glandular kallikrein (263 aa).

An N-terminal signal peptide occupies residues M1 to A18. Residues P19–R24 constitute a propeptide, activation peptide. Residues I25–A260 enclose the Peptidase S1 domain. 5 disulfide bridges follow: C31–C175, C50–C66, C153–C221, C186–C200, and C211–C236. H65 (charge relay system) is an active-site residue. Residue N102 is glycosylated (N-linked (GlcNAc...) asparagine). D121 functions as the Charge relay system in the catalytic mechanism. The Charge relay system role is filled by S215.

Belongs to the peptidase S1 family. Kallikrein subfamily.

The enzyme catalyses Preferential cleavage of Arg-|-Xaa bonds in small molecule substrates. Highly selective action to release kallidin (lysyl-bradykinin) from kininogen involves hydrolysis of Met-|-Xaa or Leu-|-Xaa.. Its function is as follows. Glandular kallikreins cleave Met-Lys and Arg-Ser bonds in kininogen to release Lys-bradykinin. In Mastomys natalensis (African soft-furred rat), this protein is Renal glandular kallikrein.